The chain runs to 157 residues: MNKIPMTVAGQIALDEELKRLKTIERPAVIAAISEAREHGDLSENAEYHAAKERQGWIEGRVQELEDKLARAQVIDITKMSGDTVKFGATVTVLDEDTEQESTYQIVGEDESDVKSGKISISSPIARSMINKEVGDVAEVNAPGGLKSYEIMSVSWG.

Belongs to the GreA/GreB family.

In terms of biological role, necessary for efficient RNA polymerase transcription elongation past template-encoded arresting sites. The arresting sites in DNA have the property of trapping a certain fraction of elongating RNA polymerases that pass through, resulting in locked ternary complexes. Cleavage of the nascent transcript by cleavage factors such as GreA or GreB allows the resumption of elongation from the new 3'terminus. GreA releases sequences of 2 to 3 nucleotides. The protein is Transcription elongation factor GreA of Maricaulis maris (strain MCS10) (Caulobacter maris).